A 191-amino-acid chain; its full sequence is Neuronal calcium sensor 1 (191 aa).

Residue Gly-2 is the site of N-myristoyl glycine attachment. EF-hand domains are found at residues 24–59, 60–95, 96–131, and 144–179; these read ESEIKQWHKGFRKDCPDGKLTLEGFTKIYQQFFPFG, DPSKFANFVFNVFDENKDGFISFSEFLQALSVTSRG, TVEEKLKWAFRLYDLDNDGYITRDELLDIVDAIYRM, and TPEKRVNRIFQVMDKNKDDQLTFEEFLEGSKEDPTI. Positions 73, 75, 77, 84, 109, 111, 113, 115, 120, 157, 159, 161, 163, and 168 each coordinate Ca(2+).

It belongs to the recoverin family.

Its subcellular location is the perikaryon. It is found in the cell projection. The protein localises to the growth cone. Its function is as follows. Neuronal calcium sensor, regulator of G protein-coupled receptor phosphorylation in a calcium dependent manner. Regulates neurite extension and branching by activity-dependent Ca(2+) influx in growth cones. The sequence is that of Neuronal calcium sensor 1 from Lymnaea stagnalis (Great pond snail).